We begin with the raw amino-acid sequence, 508 residues long: Maturase K (508 aa).

This sequence belongs to the intron maturase 2 family. MatK subfamily.

It localises to the plastid. The protein localises to the chloroplast. Functionally, usually encoded in the trnK tRNA gene intron. Probably assists in splicing its own and other chloroplast group II introns. In Manilkara zapota (Sapodilla plum), this protein is Maturase K.